The primary structure comprises 164 residues: Thiol peroxidase (164 aa).

The Thioredoxin domain occupies 18-163 (INEGDFAPDF…FDAALAAYKN (146 aa)). Catalysis depends on Cys60, which acts as the Cysteine sulfenic acid (-SOH) intermediate. An intrachain disulfide couples Cys60 to Cys93.

It belongs to the peroxiredoxin family. Tpx subfamily. Homodimer.

The enzyme catalyses a hydroperoxide + [thioredoxin]-dithiol = an alcohol + [thioredoxin]-disulfide + H2O. In terms of biological role, thiol-specific peroxidase that catalyzes the reduction of hydrogen peroxide and organic hydroperoxides to water and alcohols, respectively. Plays a role in cell protection against oxidative stress by detoxifying peroxides. In Staphylococcus aureus (strain Mu50 / ATCC 700699), this protein is Thiol peroxidase.